The sequence spans 228 residues: Large ribosomal subunit protein bL25 (228 aa).

Residues 196–228 (EEAAVAEAQSAESAEGKAEAEAEATNEKNKSEA) form a disordered region. Positions 209–228 (AEGKAEAEAEATNEKNKSEA) are enriched in basic and acidic residues.

The protein belongs to the bacterial ribosomal protein bL25 family. CTC subfamily. As to quaternary structure, part of the 50S ribosomal subunit; part of the 5S rRNA/L5/L18/L25 subcomplex. Contacts the 5S rRNA. Binds to the 5S rRNA independently of L5 and L18.

Functionally, this is one of the proteins that binds to the 5S RNA in the ribosome where it forms part of the central protuberance. In Methylorubrum extorquens (strain CM4 / NCIMB 13688) (Methylobacterium extorquens), this protein is Large ribosomal subunit protein bL25.